A 540-amino-acid chain; its full sequence is Intestinal-type alkaline phosphatase 1 (540 aa).

The signal sequence occupies residues 1-20 (MQGDWVLLLLLGLRIHLSFG). Residue D62 participates in Mg(2+) binding. Zn(2+)-binding residues include D62 and S112. The active-site Phosphoserine intermediate is S112. C141 and C203 are disulfide-bonded. N-linked (GlcNAc...) asparagine glycosylation occurs at N142. S175 contributes to the Mg(2+) binding site. Positions 236, 289, and 290 each coordinate Ca(2+). A glycan (N-linked (GlcNAc...) asparagine) is linked at N301. Residue D305 participates in Ca(2+) binding. Mg(2+) is bound at residue E331. D336, H340, D377, and H378 together coordinate Zn(2+). N-linked (GlcNAc...) asparagine glycosylation occurs at N428. Residue H452 participates in Zn(2+) binding. The cysteines at positions 487 and 494 are disulfide-linked. The GPI-anchor amidated asparagine moiety is linked to residue N511. The propeptide at 512-540 (SAITMNNVLLSLQLLVSMLLLVGTALVVS) is removed in mature form.

This sequence belongs to the alkaline phosphatase family. Homodimer. Mg(2+) serves as cofactor. The cofactor is Zn(2+). Requires Ca(2+) as cofactor.

It localises to the cell membrane. It catalyses the reaction a phosphate monoester + H2O = an alcohol + phosphate. Functionally, alkaline phosphatase that can hydrolyze various phosphate compounds. In Rattus norvegicus (Rat), this protein is Intestinal-type alkaline phosphatase 1 (Alpi).